A 242-amino-acid chain; its full sequence is Small ribosomal subunit protein uS2 (242 aa).

It belongs to the universal ribosomal protein uS2 family.

The protein is Small ribosomal subunit protein uS2 of Shewanella woodyi (strain ATCC 51908 / MS32).